The chain runs to 594 residues: DNA polymerase II small subunit (594 aa).

This sequence belongs to the DNA polymerase delta/II small subunit family. In terms of assembly, heterodimer of a large subunit and a small subunit.

The catalysed reaction is DNA(n) + a 2'-deoxyribonucleoside 5'-triphosphate = DNA(n+1) + diphosphate. It catalyses the reaction Exonucleolytic cleavage in the 3'- to 5'-direction to yield nucleoside 5'-phosphates.. In terms of biological role, possesses two activities: a DNA synthesis (polymerase) and an exonucleolytic activity that degrades single-stranded DNA in the 3' to 5' direction. Has a template-primer preference which is characteristic of a replicative DNA polymerase. The sequence is that of DNA polymerase II small subunit (polB) from Methanocaldococcus jannaschii (strain ATCC 43067 / DSM 2661 / JAL-1 / JCM 10045 / NBRC 100440) (Methanococcus jannaschii).